The primary structure comprises 262 residues: 5'-nucleotidase SurE (262 aa).

A divalent metal cation-binding residues include Asp-8, Asp-9, Ser-40, and Asn-92.

This sequence belongs to the SurE nucleotidase family. A divalent metal cation serves as cofactor.

The protein localises to the cytoplasm. It carries out the reaction a ribonucleoside 5'-phosphate + H2O = a ribonucleoside + phosphate. Functionally, nucleotidase that shows phosphatase activity on nucleoside 5'-monophosphates. The chain is 5'-nucleotidase SurE from Xylella fastidiosa (strain 9a5c).